The chain runs to 458 residues: Phosphoglucosamine mutase (458 aa).

Ser-108 functions as the Phosphoserine intermediate in the catalytic mechanism. Mg(2+)-binding residues include Ser-108, Asp-247, Asp-249, and Asp-251. At Ser-108 the chain carries Phosphoserine.

This sequence belongs to the phosphohexose mutase family. Mg(2+) is required as a cofactor. Activated by phosphorylation.

The catalysed reaction is alpha-D-glucosamine 1-phosphate = D-glucosamine 6-phosphate. Its function is as follows. Catalyzes the conversion of glucosamine-6-phosphate to glucosamine-1-phosphate. The chain is Phosphoglucosamine mutase from Nitrosomonas eutropha (strain DSM 101675 / C91 / Nm57).